The sequence spans 213 residues: Glycerol-3-phosphate acyltransferase (213 aa).

6 helical membrane-spanning segments follow: residues 3-23 (ILLL…LWIG), 54-76 (TITF…WLGI), 83-100 (IIGF…FTGF), 110-130 (AGVL…VFAL), 142-162 (SITA…IHFL), and 163-183 (LDGY…VIIF).

The protein belongs to the PlsY family. As to quaternary structure, probably interacts with PlsX.

The protein localises to the cell membrane. The catalysed reaction is an acyl phosphate + sn-glycerol 3-phosphate = a 1-acyl-sn-glycero-3-phosphate + phosphate. Its pathway is lipid metabolism; phospholipid metabolism. Catalyzes the transfer of an acyl group from acyl-phosphate (acyl-PO(4)) to glycerol-3-phosphate (G3P) to form lysophosphatidic acid (LPA). This enzyme utilizes acyl-phosphate as fatty acyl donor, but not acyl-CoA or acyl-ACP. The sequence is that of Glycerol-3-phosphate acyltransferase from Streptococcus thermophilus (strain ATCC BAA-491 / LMD-9).